The sequence spans 260 residues: DNA-directed RNA polymerase subunit Rpo3 (260 aa).

It belongs to the archaeal Rpo3/eukaryotic RPB3 RNA polymerase subunit family. Part of the RNA polymerase complex.

It is found in the cytoplasm. The catalysed reaction is RNA(n) + a ribonucleoside 5'-triphosphate = RNA(n+1) + diphosphate. Its function is as follows. DNA-dependent RNA polymerase (RNAP) catalyzes the transcription of DNA into RNA using the four ribonucleoside triphosphates as substrates. The polypeptide is DNA-directed RNA polymerase subunit Rpo3 (Pyrobaculum aerophilum (strain ATCC 51768 / DSM 7523 / JCM 9630 / CIP 104966 / NBRC 100827 / IM2)).